The chain runs to 163 residues: 2-C-methyl-D-erythritol 2,4-cyclodiphosphate synthase (163 aa).

A divalent metal cation contacts are provided by Asp10 and His12. 4-CDP-2-C-methyl-D-erythritol 2-phosphate-binding positions include 10-12 and 36-37; these read DVH and HS. His44 contacts a divalent metal cation. 4-CDP-2-C-methyl-D-erythritol 2-phosphate is bound by residues 58–60, 63–67, 134–137, Phe141, and Arg144; these read DIG, FPDND, and TTTE.

Belongs to the IspF family. As to quaternary structure, homotrimer. A divalent metal cation serves as cofactor.

It carries out the reaction 4-CDP-2-C-methyl-D-erythritol 2-phosphate = 2-C-methyl-D-erythritol 2,4-cyclic diphosphate + CMP. It participates in isoprenoid biosynthesis; isopentenyl diphosphate biosynthesis via DXP pathway; isopentenyl diphosphate from 1-deoxy-D-xylulose 5-phosphate: step 4/6. In terms of biological role, involved in the biosynthesis of isopentenyl diphosphate (IPP) and dimethylallyl diphosphate (DMAPP), two major building blocks of isoprenoid compounds. Catalyzes the conversion of 4-diphosphocytidyl-2-C-methyl-D-erythritol 2-phosphate (CDP-ME2P) to 2-C-methyl-D-erythritol 2,4-cyclodiphosphate (ME-CPP) with a corresponding release of cytidine 5-monophosphate (CMP). The protein is 2-C-methyl-D-erythritol 2,4-cyclodiphosphate synthase of Carboxydothermus hydrogenoformans (strain ATCC BAA-161 / DSM 6008 / Z-2901).